A 333-amino-acid chain; its full sequence is Galactinol synthase 5 (333 aa).

The active site involves Lys103. Asp119, Asp121, and His257 together coordinate Mn(2+).

This sequence belongs to the glycosyltransferase 8 family. Galactosyltransferase subfamily. The cofactor is a divalent metal cation.

Its subcellular location is the cytoplasm. It carries out the reaction myo-inositol + UDP-alpha-D-galactose = alpha-D-galactosyl-(1-&gt;3)-1D-myo-inositol + UDP + H(+). Galactinol synthase involved in the biosynthesis of raffinose family oligosaccharides (RFOs) that function as osmoprotectants. May promote plant stress tolerance. This is Galactinol synthase 5 (GOLS5) from Arabidopsis thaliana (Mouse-ear cress).